The sequence spans 579 residues: Type IV pilus assembly ATPase PilB (579 aa).

340 to 345 (GSGKTV) contributes to the ATP binding site. Residues C470, C473, C507, and C510 each coordinate Zn(2+).

This sequence belongs to the GSP E family. As to quaternary structure, interacts with CpiA.

Its subcellular location is the cytoplasm. With respect to regulation, inhibited by the inhibitory protein CpiA. In terms of biological role, ATPase component of the type IV pilus (T4P). Acts as a molecular motor to provide the energy that is required for biogenesis of the pilus and the extrusion of substrates generated in the cytoplasm. PilB is required for optimal T4P extension and, consequently, efficient natural transformation. May promote processive T4P extension. The sequence is that of Type IV pilus assembly ATPase PilB from Acinetobacter baylyi (strain ATCC 33305 / BD413 / ADP1).